The sequence spans 284 residues: Neutral protease 2 homolog AFLA_119780 (284 aa).

2 cysteine pairs are disulfide-bonded: C113-C185 and C192-C210. H235 contacts Zn(2+). The active site involves E236. The Zn(2+) site is built by H239 and D250.

Belongs to the peptidase M35 family. It depends on Zn(2+) as a cofactor.

The protein resides in the secreted. It carries out the reaction Preferential cleavage of bonds with hydrophobic residues in P1'. Also 3-Asn-|-Gln-4 and 8-Gly-|-Ser-9 bonds in insulin B chain.. Its function is as follows. Secreted metalloproteinase that allows assimilation of proteinaceous substrates. Shows high activities on basic nuclear substrates such as histone and protamine. This Aspergillus flavus (strain ATCC 200026 / FGSC A1120 / IAM 13836 / NRRL 3357 / JCM 12722 / SRRC 167) protein is Neutral protease 2 homolog AFLA_119780.